A 211-amino-acid chain; its full sequence is Large ribosomal subunit protein uL3 (211 aa).

Glutamine 150 is modified (N5-methylglutamine).

The protein belongs to the universal ribosomal protein uL3 family. As to quaternary structure, part of the 50S ribosomal subunit. Forms a cluster with proteins L14 and L19. Post-translationally, methylated by PrmB.

Its function is as follows. One of the primary rRNA binding proteins, it binds directly near the 3'-end of the 23S rRNA, where it nucleates assembly of the 50S subunit. In Pseudomonas aeruginosa (strain LESB58), this protein is Large ribosomal subunit protein uL3.